Here is a 237-residue protein sequence, read N- to C-terminus: MESLSELQNPLLPRSPTHLHRPYPYPEAPPGWSCQEQLYSFLLGGAGPARAHQLLDPGSLQLAVEAWYRPSCLLGRDKVKEPKAGSCETSFTEAREPLAGPAEEGSEPGQAAEDVTIHTVSYGVQEELQGQEDSQEEESDGTSSESECEDAFLTLPPRDHLGLTLFSMLCCFWPLGIAAFYFSQGTSKAISKGDFRLASTTSRRALFLATLSIAVGAGLYVAVVVALAAYMSQNGHG.

3 disordered regions span residues 1–23, 84–111, and 127–148; these read MESLSELQNPLLPRSPTHLHRPY, AGSCETSFTEAREPLAGPAEEGSEPGQA, and ELQGQEDSQEEESDGTSSESEC. Over 1–161 the chain is Extracellular; it reads MESLSELQNP…FLTLPPRDHL (161 aa). Residues 129-148 show a composition bias toward acidic residues; it reads QGQEDSQEEESDGTSSESEC. Residues 162-182 form a helical membrane-spanning segment; sequence GLTLFSMLCCFWPLGIAAFYF. Residues 183-204 lie on the Cytoplasmic side of the membrane; that stretch reads SQGTSKAISKGDFRLASTTSRR. A helical membrane pass occupies residues 205 to 225; it reads ALFLATLSIAVGAGLYVAVVV. Residues 226-237 lie on the Extracellular side of the membrane; it reads ALAAYMSQNGHG.

This sequence belongs to the CD225/Dispanin family. Expression is restricted to the caudate-putamen. Down-regulated in R6/2 transgenic mice, a model for Huntington disease.

The protein localises to the membrane. It is found in the golgi apparatus. It localises to the cis-Golgi network. The protein is Synapse differentiation-inducing gene protein 1-like (Syndig1l) of Mus musculus (Mouse).